Reading from the N-terminus, the 353-residue chain is Putative glutamine synthetase (353 aa).

Residues 19–102 (SIIEYVWIGG…VICDTYDVNG (84 aa)) enclose the GS beta-grasp domain. The region spanning 109–353 (HRHNANIIFE…IILQTVCESD (245 aa)) is the GS catalytic domain.

The protein belongs to the glutamine synthetase family.

The catalysed reaction is L-glutamate + NH4(+) + ATP = L-glutamine + ADP + phosphate + H(+). This Acanthamoeba polyphaga (Amoeba) protein is Putative glutamine synthetase.